Here is a 350-residue protein sequence, read N- to C-terminus: 3-dehydroquinate synthase (350 aa).

Residues 63-68 (DGEEYK), 97-101 (GVIGD), 121-122 (TT), Lys-134, Lys-143, and 161-164 (FLKT) contribute to the NAD(+) site. Zn(2+) contacts are provided by Glu-176, His-235, and His-252.

It belongs to the sugar phosphate cyclases superfamily. Dehydroquinate synthase family. Co(2+) serves as cofactor. The cofactor is Zn(2+). It depends on NAD(+) as a cofactor.

The protein localises to the cytoplasm. It catalyses the reaction 7-phospho-2-dehydro-3-deoxy-D-arabino-heptonate = 3-dehydroquinate + phosphate. The protein operates within metabolic intermediate biosynthesis; chorismate biosynthesis; chorismate from D-erythrose 4-phosphate and phosphoenolpyruvate: step 2/7. In terms of biological role, catalyzes the conversion of 3-deoxy-D-arabino-heptulosonate 7-phosphate (DAHP) to dehydroquinate (DHQ). The protein is 3-dehydroquinate synthase of Sulfurovum sp. (strain NBC37-1).